The following is a 383-amino-acid chain: Succinyl-diaminopimelate desuccinylase (383 aa).

H72 lines the Zn(2+) pocket. D74 is a catalytic residue. Residue D105 participates in Zn(2+) binding. The active-site Proton acceptor is E137. Residues E138, E167, and H352 each contribute to the Zn(2+) site.

The protein belongs to the peptidase M20A family. DapE subfamily. In terms of assembly, homodimer. Zn(2+) serves as cofactor. Co(2+) is required as a cofactor.

It carries out the reaction N-succinyl-(2S,6S)-2,6-diaminopimelate + H2O = (2S,6S)-2,6-diaminopimelate + succinate. The protein operates within amino-acid biosynthesis; L-lysine biosynthesis via DAP pathway; LL-2,6-diaminopimelate from (S)-tetrahydrodipicolinate (succinylase route): step 3/3. In terms of biological role, catalyzes the hydrolysis of N-succinyl-L,L-diaminopimelic acid (SDAP), forming succinate and LL-2,6-diaminopimelate (DAP), an intermediate involved in the bacterial biosynthesis of lysine and meso-diaminopimelic acid, an essential component of bacterial cell walls. The chain is Succinyl-diaminopimelate desuccinylase from Ehrlichia ruminantium (strain Welgevonden).